We begin with the raw amino-acid sequence, 61 residues long: UPF0434 protein PSPTO_3844 (61 aa).

The protein belongs to the UPF0434 family.

The polypeptide is UPF0434 protein PSPTO_3844 (Pseudomonas syringae pv. tomato (strain ATCC BAA-871 / DC3000)).